Reading from the N-terminus, the 360-residue chain is Protein Wnt-2 (360 aa).

Positions 1 to 25 (MNAPLGGIWLWLPLLLTWLTPEVNS) are cleaved as a signal peptide. Disulfide bonds link cysteine 76-cysteine 87, cysteine 127-cysteine 135, cysteine 137-cysteine 157, cysteine 206-cysteine 220, cysteine 208-cysteine 215, cysteine 278-cysteine 309, cysteine 294-cysteine 304, cysteine 308-cysteine 348, cysteine 324-cysteine 339, cysteine 326-cysteine 336, and cysteine 331-cysteine 332. A lipid anchor (O-palmitoleoyl serine; by PORCN) is attached at serine 212. N-linked (GlcNAc...) asparagine glycosylation is present at asparagine 295.

Belongs to the Wnt family. In terms of processing, palmitoleoylation is required for efficient binding to frizzled receptors. Depalmitoleoylation leads to Wnt signaling pathway inhibition. In terms of tissue distribution, expressed in brain in the thalamus, in fetal and adult lung and in placenta.

The protein localises to the secreted. It is found in the extracellular space. The protein resides in the extracellular matrix. Ligand for members of the frizzled family of seven transmembrane receptors. Functions in the canonical Wnt signaling pathway that results in activation of transcription factors of the TCF/LEF family. Functions as a upstream regulator of FGF10 expression. Plays an important role in embryonic lung development. May contribute to embryonic brain development by regulating the proliferation of dopaminergic precursors and neurons. This is Protein Wnt-2 (WNT2) from Homo sapiens (Human).